The following is a 709-amino-acid chain: Pentatricopeptide repeat-containing protein At5g42310, chloroplastic (709 aa).

The N-terminal 54 residues, 1-54, are a transit peptide targeting the chloroplast; sequence MLLLQQPPLVSTRFHSLYFLTHHHHHHHRFFQPPISAFSATTSASLPSPSPSSS. PPR repeat units follow at residues 196-230, 231-267, 268-302, 303-337, 338-372, 373-407, 408-442, 443-477, 478-512, 513-547, 548-582, 583-617, 618-652, and 653-687; these read TPLT…GYQS, DFVN…KLEL, DVQL…GLSA, KTAT…GIKP, RTRA…GVSP, DEHT…DVQP, NSFV…GVKP, DRQF…GIEP, DRVT…GCLP, CATT…GILP, NVVT…GLKP, SSTM…GLKP, SLLA…GVKP, and DVVT…GCKP.

Belongs to the PPR family. P subfamily. As to quaternary structure, interacts with PDE338.

The protein localises to the plastid. The protein resides in the chloroplast stroma. It is found in the chloroplast thylakoid. It localises to the chloroplast. Required for chloroplast protein synthesis and accumulation of subunits of the thylakoid protein complexes. Activates psaC and petA translation by binding their 5'-UTRs. Required for the correct processing of petB and petD mRNAs. Interacts with the petB and petD intergenic region and is required for the generation of petB and petD monocistronic RNAs. The sequence is that of Pentatricopeptide repeat-containing protein At5g42310, chloroplastic from Arabidopsis thaliana (Mouse-ear cress).